Consider the following 224-residue polypeptide: Ribose-5-phosphate isomerase A (224 aa).

Substrate-binding positions include 26–29 (TGST), 82–85 (DGAD), and 95–98 (KGGG). Residue glutamate 104 is the Proton acceptor of the active site. Lysine 122 is a substrate binding site.

Belongs to the ribose 5-phosphate isomerase family. As to quaternary structure, homodimer.

The enzyme catalyses aldehydo-D-ribose 5-phosphate = D-ribulose 5-phosphate. It participates in carbohydrate degradation; pentose phosphate pathway; D-ribose 5-phosphate from D-ribulose 5-phosphate (non-oxidative stage): step 1/1. Its function is as follows. Catalyzes the reversible conversion of ribose-5-phosphate to ribulose 5-phosphate. The chain is Ribose-5-phosphate isomerase A from Lactococcus lactis subsp. cremoris (strain MG1363).